The primary structure comprises 425 residues: Serine hydroxymethyltransferase (425 aa).

Residues Leu128 and 132–134 (GHL) each bind (6S)-5,6,7,8-tetrahydrofolate. Lys237 is subject to N6-(pyridoxal phosphate)lysine.

It belongs to the SHMT family. Homodimer. The cofactor is pyridoxal 5'-phosphate.

The protein localises to the cytoplasm. The catalysed reaction is (6R)-5,10-methylene-5,6,7,8-tetrahydrofolate + glycine + H2O = (6S)-5,6,7,8-tetrahydrofolate + L-serine. The protein operates within one-carbon metabolism; tetrahydrofolate interconversion. It participates in amino-acid biosynthesis; glycine biosynthesis; glycine from L-serine: step 1/1. In terms of biological role, catalyzes the reversible interconversion of serine and glycine with tetrahydrofolate (THF) serving as the one-carbon carrier. This reaction serves as the major source of one-carbon groups required for the biosynthesis of purines, thymidylate, methionine, and other important biomolecules. Also exhibits THF-independent aldolase activity toward beta-hydroxyamino acids, producing glycine and aldehydes, via a retro-aldol mechanism. This chain is Serine hydroxymethyltransferase, found in Wolbachia pipientis wMel.